The sequence spans 201 residues: Large ribosomal subunit protein uL4 (201 aa).

Residues 44–68 (KAQKTRSEVAGTTKKSKKQKGGGAR) form a disordered region.

This sequence belongs to the universal ribosomal protein uL4 family. In terms of assembly, part of the 50S ribosomal subunit.

One of the primary rRNA binding proteins, this protein initially binds near the 5'-end of the 23S rRNA. It is important during the early stages of 50S assembly. It makes multiple contacts with different domains of the 23S rRNA in the assembled 50S subunit and ribosome. Its function is as follows. Forms part of the polypeptide exit tunnel. This is Large ribosomal subunit protein uL4 from Xanthomonas axonopodis pv. citri (strain 306).